The sequence spans 67 residues: Small ribosomal subunit protein eS31 (67 aa).

Zn(2+) is bound by residues C31, C34, C49, and C52. The segment at 31-52 (CPKCGAGVFMAEHLNRFACGKC) adopts a C4-type zinc-finger fold.

The protein belongs to the eukaryotic ribosomal protein eS31 family. As to quaternary structure, part of the 30S ribosomal subunit. The cofactor is Zn(2+).

This is Small ribosomal subunit protein eS31 from Methanococcus maripaludis (strain C5 / ATCC BAA-1333).